The sequence spans 420 residues: Probable protein phosphatase 2C 76 (420 aa).

The 247-residue stretch at 101-347 folds into the PPM-type phosphatase domain; that stretch reads SCGYCSFRGK…DNITCIVVKF (247 aa). Mn(2+)-binding residues include Asp137, Gly138, Asp299, and Asp338. The interval 353–420 is disordered; that stretch reads ESPKIETNAM…PETKGEKAGE (68 aa). Positions 403–420 are enriched in basic and acidic residues; that stretch reads PDPKPETEPETKGEKAGE.

The protein belongs to the PP2C family. Requires Mg(2+) as cofactor. It depends on Mn(2+) as a cofactor.

The catalysed reaction is O-phospho-L-seryl-[protein] + H2O = L-seryl-[protein] + phosphate. It carries out the reaction O-phospho-L-threonyl-[protein] + H2O = L-threonyl-[protein] + phosphate. The sequence is that of Probable protein phosphatase 2C 76 from Arabidopsis thaliana (Mouse-ear cress).